The following is a 130-amino-acid chain: 3-aminoacrylate deaminase RutC (130 aa).

The protein belongs to the RutC family.

It carries out the reaction (Z)-3-aminoacrylate + H2O + H(+) = 3-oxopropanoate + NH4(+). Functionally, involved in pyrimidine catabolism. Catalyzes the deamination of 3-aminoacrylate to malonic semialdehyde, a reaction that can also occur spontaneously. RutC may facilitate the reaction and modulate the metabolic fitness, rather than catalyzing essential functions. This chain is 3-aminoacrylate deaminase RutC, found in Variovorax paradoxus (strain S110).